A 493-amino-acid polypeptide reads, in one-letter code: Guanosine-5'-triphosphate,3'-diphosphate pyrophosphatase (493 aa).

It belongs to the GppA/Ppx family. GppA subfamily.

It catalyses the reaction guanosine 3'-diphosphate 5'-triphosphate + H2O = guanosine 3',5'-bis(diphosphate) + phosphate + H(+). Its pathway is purine metabolism; ppGpp biosynthesis; ppGpp from GTP: step 2/2. Its function is as follows. Catalyzes the conversion of pppGpp to ppGpp. Guanosine pentaphosphate (pppGpp) is a cytoplasmic signaling molecule which together with ppGpp controls the 'stringent response', an adaptive process that allows bacteria to respond to amino acid starvation, resulting in the coordinated regulation of numerous cellular activities. In Salmonella choleraesuis (strain SC-B67), this protein is Guanosine-5'-triphosphate,3'-diphosphate pyrophosphatase.